A 289-amino-acid polypeptide reads, in one-letter code: Oxaloacetate decarboxylase (289 aa).

Substrate is bound at residue S50. D88 lines the Mg(2+) pocket. Residues R159 and H235 each contribute to the substrate site.

The protein belongs to the isocitrate lyase/PEP mutase superfamily. Oxaloacetate decarboxylase family. Homotetramer; dimer of dimers. Mg(2+) serves as cofactor.

It catalyses the reaction oxaloacetate + H(+) = pyruvate + CO2. Catalyzes the decarboxylation of oxaloacetate into pyruvate. Seems to play a role in maintaining cellular concentrations of bicarbonate and pyruvate. The protein is Oxaloacetate decarboxylase of Pseudomonas putida (strain GB-1).